The following is a 142-amino-acid chain: Putative pre-16S rRNA nuclease (142 aa).

It belongs to the YqgF nuclease family.

The protein resides in the cytoplasm. Functionally, could be a nuclease involved in processing of the 5'-end of pre-16S rRNA. The polypeptide is Putative pre-16S rRNA nuclease (Nitratidesulfovibrio vulgaris (strain DP4) (Desulfovibrio vulgaris)).